Here is a 433-residue protein sequence, read N- to C-terminus: tRNA-2-methylthio-N(6)-dimethylallyladenosine synthase (433 aa).

The MTTase N-terminal domain occupies 4 to 119 (KKLFIQTLGC…ITQAIKTPKF (116 aa)). Cys-13, Cys-50, Cys-82, Cys-151, Cys-155, and Cys-158 together coordinate [4Fe-4S] cluster. The region spanning 137 to 370 (RNSIYKSYIN…QNRHSEILDK (234 aa)) is the Radical SAM core domain. Residues 373–433 (KKQENKTFKV…KRMVLYGEIV (61 aa)) form the TRAM domain.

It belongs to the methylthiotransferase family. MiaB subfamily. As to quaternary structure, monomer. [4Fe-4S] cluster serves as cofactor.

It is found in the cytoplasm. The catalysed reaction is N(6)-dimethylallyladenosine(37) in tRNA + (sulfur carrier)-SH + AH2 + 2 S-adenosyl-L-methionine = 2-methylsulfanyl-N(6)-dimethylallyladenosine(37) in tRNA + (sulfur carrier)-H + 5'-deoxyadenosine + L-methionine + A + S-adenosyl-L-homocysteine + 2 H(+). Catalyzes the methylthiolation of N6-(dimethylallyl)adenosine (i(6)A), leading to the formation of 2-methylthio-N6-(dimethylallyl)adenosine (ms(2)i(6)A) at position 37 in tRNAs that read codons beginning with uridine. This is tRNA-2-methylthio-N(6)-dimethylallyladenosine synthase from Campylobacter jejuni subsp. jejuni serotype O:2 (strain ATCC 700819 / NCTC 11168).